Consider the following 215-residue polypeptide: ATP phosphoribosyltransferase (215 aa).

It belongs to the ATP phosphoribosyltransferase family. Short subfamily. As to quaternary structure, heteromultimer composed of HisG and HisZ subunits.

The protein localises to the cytoplasm. The catalysed reaction is 1-(5-phospho-beta-D-ribosyl)-ATP + diphosphate = 5-phospho-alpha-D-ribose 1-diphosphate + ATP. It functions in the pathway amino-acid biosynthesis; L-histidine biosynthesis; L-histidine from 5-phospho-alpha-D-ribose 1-diphosphate: step 1/9. Catalyzes the condensation of ATP and 5-phosphoribose 1-diphosphate to form N'-(5'-phosphoribosyl)-ATP (PR-ATP). Has a crucial role in the pathway because the rate of histidine biosynthesis seems to be controlled primarily by regulation of HisG enzymatic activity. The polypeptide is ATP phosphoribosyltransferase (Acidithiobacillus ferrooxidans (strain ATCC 23270 / DSM 14882 / CIP 104768 / NCIMB 8455) (Ferrobacillus ferrooxidans (strain ATCC 23270))).